Here is a 521-residue protein sequence, read N- to C-terminus: MEIVISAIIGLLIGGTVVFVIKRLQDNNKKKSARFEAERIVNKANSEAAKIKKESENKAKDFESRARKNVEQDIHKQKSTLKNKESQLERRLKEVEDQFKQKMEENERYLNSLKDREEKIAISENRIKDLEKKGEAHIGELKQKLESVAAMSQDEARRQLLTALEDEAKQEAAKKIAQIEEEANKESEKKAKRILATALSRFASEYTSERTVSVLALPNDEMKGKIIGREGRNIRTLEAHCGVDLIVDDTPEAVVISGFDPVRRELARRTIEKLMEDGRVHPARIEEVAEKQRNELMKSMKEEGERHVMELGIPNMHPELVKIIGGLKYRSYQGQNALNQSLEVATIAGLLAAELGVSVKLARRAGLLHNIGKAIDHTVEGSYAFVGAEAAKKYNESEDVCHAIRAHDEEEKPHSILAWIVHAAYTLSSSRPGARRPQMDTFIHRLEDLESIGNSFDGVLKTLALQAGKDIRVLVESSRVTDDQAVMLSRDIARKIEREMPQAGQVKVTVVRETRSVEHAR.

Residues 1–21 (MEIVISAIIGLLIGGTVVFVI) traverse the membrane as a helical segment. Residues 51-87 (IKKESENKAKDFESRARKNVEQDIHKQKSTLKNKESQ) are disordered. The KH domain maps to 211–271 (TVSVLALPND…VRRELARRTI (61 aa)). Positions 337–430 (ALNQSLEVAT…VHAAYTLSSS (94 aa)) constitute an HD domain.

Belongs to the RNase Y family.

Its subcellular location is the cell membrane. Endoribonuclease that initiates mRNA decay. This is Ribonuclease Y 1 from Bdellovibrio bacteriovorus (strain ATCC 15356 / DSM 50701 / NCIMB 9529 / HD100).